Consider the following 382-residue polypeptide: Sphingoid long-chain base transporter RSB1 (382 aa).

Topologically, residues 1–34 (MSNATNNTLGSLLPQLEAAANSNSLYGGMVPNLR) are extracellular. N-linked (GlcNAc...) asparagine glycans are attached at residues N3 and N6. A helical transmembrane segment spans residues 35–55 (FNITMIVIWGILLTIHVVQLL). At 56–57 (MR) the chain is on the cytoplasmic side. Residues 58–78 (QYWFSIAFICTGILEVLGFIG) form a helical membrane-spanning segment. Residues 79–90 (RTWSHSNVADMD) are Extracellular-facing. A helical membrane pass occupies residues 91 to 111 (AFLLNMICLTIAPVFTMGGIY). Topologically, residues 112–135 (YQLAKLIEVYGHRFSLLPSPMAYS) are cytoplasmic. The helical transmembrane segment at 136-156 (FIFICSDIVSLVVQAVGGGLC) threads the bilayer. Topologically, residues 157–171 (GVAVTDGTSTTTGNH) are extracellular. The chain crosses the membrane as a helical span at residues 172–192 (VFIAGLAIQVASMAIFLMLWF). The Cytoplasmic portion of the chain corresponds to 193 to 241 (HFLFRIYISVRWEHINSRPISLSLLKISQTEVDYLYREKFHFLRLEPKR). The chain crosses the membrane as a helical span at residues 242–262 (WVFHYFNLAITVAVLTIFTRC). The Extracellular segment spans residues 263 to 281 (CYRLAELVVGWDGYLITHE). Residues 282-302 (WYFIILDALMMAIATVTLTIF) traverse the membrane as a helical segment. Residues 303 to 382 (HPGFAFKGKS…LFSSKKKAKL (80 aa)) are Cytoplasmic-facing.

It belongs to the lipid-translocating exporter (LTE) (TC 9.A.26.1) family.

The protein localises to the cell membrane. Catalyzes the ATP-dependent translocation of sphingoid long-chain bases (LCBs) from the cytoplasmic site toward the extracytoplasmic side of the membrane (flip-flop). Involved in the establishment of the functional lipid asymmetry of the plasma membrane. Regulates intracellular levels of LCBs, sphingolipid precursors that are growth inhibitory at increased levels. In Saccharomyces cerevisiae (strain JAY291) (Baker's yeast), this protein is Sphingoid long-chain base transporter RSB1 (RSB1).